Here is a 358-residue protein sequence, read N- to C-terminus: CRS2-associated factor 2, mitochondrial (358 aa).

The transit peptide at 1-28 (MLSIRRSLTLAKEPKDLFLFLCNLRARC) directs the protein to the mitochondrion. A disordered region spans residues 35-64 (DPPFSPLSKPTKPPKEKKKQKTKKQDQSSE). CRM domains lie at 141–239 (ETLT…SRPI) and 261–357 (DGLE…ELVT).

In terms of assembly, part of large ribonucleo-protein complexes that include group IIB introns.

It localises to the mitochondrion. May be involved in the splicing of group IIB introns in mitochondria. The sequence is that of CRS2-associated factor 2, mitochondrial from Arabidopsis thaliana (Mouse-ear cress).